The sequence spans 304 residues: Acetaldehyde dehydrogenase 2 (304 aa).

Catalysis depends on Cys-131, which acts as the Acyl-thioester intermediate. Residues 162 to 170 and Asn-273 contribute to the NAD(+) site; that span reads SAGPGTRKN.

The protein belongs to the acetaldehyde dehydrogenase family.

The catalysed reaction is acetaldehyde + NAD(+) + CoA = acetyl-CoA + NADH + H(+). The polypeptide is Acetaldehyde dehydrogenase 2 (Dechloromonas aromatica (strain RCB)).